The following is a 361-amino-acid chain: Dihydroorotate dehydrogenase (quinone) (361 aa).

Residues 67–71 and Thr91 contribute to the FMN site; that span reads AGLDK. Lys71 is a substrate binding site. 116–120 contributes to the substrate binding site; the sequence is NRMGF. The FMN site is built by Asn145 and Asn178. Position 178 (Asn178) interacts with substrate. Ser181 functions as the Nucleophile in the catalytic mechanism. A substrate-binding site is contributed by Asn183. 2 residues coordinate FMN: Lys223 and Gly251. Residue 252–253 participates in substrate binding; that stretch reads NT. FMN contacts are provided by residues Gly273, Gly302, and 323-324; that span reads YT.

Belongs to the dihydroorotate dehydrogenase family. Type 2 subfamily. As to quaternary structure, monomer. Requires FMN as cofactor.

Its subcellular location is the cell membrane. It catalyses the reaction (S)-dihydroorotate + a quinone = orotate + a quinol. The protein operates within pyrimidine metabolism; UMP biosynthesis via de novo pathway; orotate from (S)-dihydroorotate (quinone route): step 1/1. In terms of biological role, catalyzes the conversion of dihydroorotate to orotate with quinone as electron acceptor. This is Dihydroorotate dehydrogenase (quinone) from Deinococcus geothermalis (strain DSM 11300 / CIP 105573 / AG-3a).